The primary structure comprises 349 residues: tRNA pseudouridine synthase D (349 aa).

Phe26 contacts substrate. Asp79 (nucleophile) is an active-site residue. Asn128 provides a ligand contact to substrate. Residues 154-302 (GVPNYFGSQR…VEGSRRAVLL (149 aa)) form the TRUD domain. Phe328 serves as a coordination point for substrate.

Belongs to the pseudouridine synthase TruD family.

It carries out the reaction uridine(13) in tRNA = pseudouridine(13) in tRNA. In terms of biological role, responsible for synthesis of pseudouridine from uracil-13 in transfer RNAs. In Yersinia pestis bv. Antiqua (strain Antiqua), this protein is tRNA pseudouridine synthase D.